Reading from the N-terminus, the 158-residue chain is Large ribosomal subunit protein uL16 (158 aa).

This sequence belongs to the universal ribosomal protein uL16 family. Part of the 50S ribosomal subunit.

Its function is as follows. Binds 23S rRNA and is also seen to make contacts with the A and possibly P site tRNAs. In Parasynechococcus marenigrum (strain WH8102), this protein is Large ribosomal subunit protein uL16.